A 678-amino-acid chain; its full sequence is Glutamate--cysteine ligase (678 aa).

The protein belongs to the glutamate--cysteine ligase type 3 family.

It catalyses the reaction L-cysteine + L-glutamate + ATP = gamma-L-glutamyl-L-cysteine + ADP + phosphate + H(+). The protein operates within sulfur metabolism; glutathione biosynthesis; glutathione from L-cysteine and L-glutamate: step 1/2. Its activity is regulated as follows. Feedback inhibition by glutathione. Functionally, catalyzes the ATP-dependent condensation of cysteine and glutamate to form the dipeptide gamma-glutamylcysteine (gamma-GC), the first and rate-limiting step in the production of glutathione (GSH). The protein is Glutamate--cysteine ligase (GSH1) of Saccharomyces cerevisiae (strain ATCC 204508 / S288c) (Baker's yeast).